A 288-amino-acid chain; its full sequence is Probable branched-chain-amino-acid aminotransferase (288 aa).

The residue at position 153 (Lys153) is an N6-(pyridoxal phosphate)lysine.

This sequence belongs to the class-IV pyridoxal-phosphate-dependent aminotransferase family. It depends on pyridoxal 5'-phosphate as a cofactor.

It catalyses the reaction L-leucine + 2-oxoglutarate = 4-methyl-2-oxopentanoate + L-glutamate. The catalysed reaction is L-isoleucine + 2-oxoglutarate = (S)-3-methyl-2-oxopentanoate + L-glutamate. The enzyme catalyses L-valine + 2-oxoglutarate = 3-methyl-2-oxobutanoate + L-glutamate. It participates in amino-acid biosynthesis; L-isoleucine biosynthesis; L-isoleucine from 2-oxobutanoate: step 4/4. The protein operates within amino-acid biosynthesis; L-leucine biosynthesis; L-leucine from 3-methyl-2-oxobutanoate: step 4/4. Its pathway is amino-acid biosynthesis; L-valine biosynthesis; L-valine from pyruvate: step 4/4. In terms of biological role, acts on leucine, isoleucine and valine. The sequence is that of Probable branched-chain-amino-acid aminotransferase (ilvE) from Rickettsia typhi (strain ATCC VR-144 / Wilmington).